Here is a 190-residue protein sequence, read N- to C-terminus: MQKKFEDCVKTILEIIGENPNREGLIKTPNRVFKAYEFLASGYTQNVKDILNDALFESSNNEMVLVRDIEFYSLCEHHLLPFFGRAHVAYIPNKKVVGLSKIPRLVEVFARRLQIQEQLTEQIAQALMENVDAKGVGVVIEARHMCVEMRGIQKANSTTTTSALRGIFLKNEKTREEFFSLINSAKQVRF.

Zn(2+)-binding residues include C75, H78, and C146.

The protein belongs to the GTP cyclohydrolase I family. In terms of assembly, toroid-shaped homodecamer, composed of two pentamers of five dimers.

It catalyses the reaction GTP + H2O = 7,8-dihydroneopterin 3'-triphosphate + formate + H(+). It functions in the pathway cofactor biosynthesis; 7,8-dihydroneopterin triphosphate biosynthesis; 7,8-dihydroneopterin triphosphate from GTP: step 1/1. The sequence is that of GTP cyclohydrolase 1 from Campylobacter jejuni (strain RM1221).